We begin with the raw amino-acid sequence, 118 residues long: T cell receptor gamma variable 8 (118 aa).

Positions 1–17 are cleaved as a signal peptide; it reads MLLALALLLAFLPPASQ. An Ig-like domain is found at 18–118; it reads KSSNLEGRTK…GVYYCATWDR (101 aa). C41 and C113 are oxidised to a cystine.

Gamma-delta TR is a heterodimer composed of a gamma and delta chain; disulfide-linked. The gamma-delta TR is associated with the transmembrane signaling CD3 coreceptor proteins following the stoichiometry: a single gamma-delta TR heterodimer associates with one CD3D-CD3E heterodimer, one CD3G-CD3E heterodimer and one CD247 homodimer forming a stable octameric structure. Upon activation, gamma-delta TR complex associates with FCER1G to initiate intracellular signaling.

The protein resides in the cell membrane. V region of the variable domain of T cell receptor (TR) gamma chain that participates in the antigen recognition. Gamma-delta TRs recognize a variety of self and foreign non-peptide antigens frequently expressed at the epithelial boundaries between the host and external environment, including endogenous lipids presented by MH-like protein CD1D and phosphoantigens presented by butyrophilin-like molecule BTN3A1. Upon antigen recognition induces rapid, innate-like immune responses involved in pathogen clearance and tissue repair. Binding of gamma-delta TR complex to antigen triggers phosphorylation of immunoreceptor tyrosine-based activation motifs (ITAMs) in the CD3 chains by the LCK and FYN kinases, allowing the recruitment, phosphorylation, and activation of ZAP70 that facilitates phosphorylation of the scaffolding proteins LCP2 and LAT. This lead to the formation of a supramolecular signalosome that recruits the phospholipase PLCG1, resulting in calcium mobilization and ERK activation, ultimately leading to T cell expansion and differentiation into effector cells. Gamma-delta TRs are produced through somatic rearrangement of a limited repertoire of variable (V), diversity (D), and joining (J) genes. The potential diversity of gamma-delta TRs is conferred by the unique ability to rearrange (D) genes in tandem and to utilize all three reading frames. The combinatorial diversity is considerably increased by the sequence exonuclease trimming and random nucleotide (N) region additions which occur during the V-(D)-J rearrangements. This chain is T cell receptor gamma variable 8, found in Homo sapiens (Human).